Reading from the N-terminus, the 348-residue chain is Ubiquitin thioesterase OTU1 (348 aa).

Over residues 1–11 (MFGPAKGRHFG) the composition is skewed to basic residues. Residues 1–39 (MFGPAKGRHFGVHPAPGFPGGVSQQAAGTKAGPAGAWPV) are disordered. The tract at residues 50–128 (RCKAKDGTHV…IIEEDQTRPR (79 aa)) is UBX-like. Positions 149-274 (LTRTVVPADN…GIHYDPLQRN (126 aa)) constitute an OTU domain. The tract at residues 154–160 (VPADNSC) is cys-loop. Aspartate 157 is an active-site residue. Cysteine 160 (nucleophile) is an active-site residue. The segment at 213–223 (IKRDDTWGGAI) is variable-loop. Residues 263–267 (YDGIH) are his-loop. Isoleucine 266 provides a ligand contact to substrate. Residue histidine 267 is part of the active site. Positions 291-296 (DIVLVQ) are S2 site. The C2H2-type zinc finger occupies 318 to 342 (LRCMVCQKGLTGQAEAREHAKETGH). Residue histidine 342 is part of the active site.

In terms of assembly, interacts with VCP; the interaction is direct. Interacts with FAF2/UBXD8. Interacts with DERL1; however interaction is dependent on the UBAX-like region, suggesting that it may be indirect. Interacts with PLAA, UBXN6 and VCP; may form a complex involved in macroautophagy.

Its subcellular location is the cytoplasm. The catalysed reaction is Thiol-dependent hydrolysis of ester, thioester, amide, peptide and isopeptide bonds formed by the C-terminal Gly of ubiquitin (a 76-residue protein attached to proteins as an intracellular targeting signal).. Functionally, hydrolase that can remove conjugated ubiquitin from proteins and participates in endoplasmic reticulum-associated degradation (ERAD) for misfolded lumenal proteins. May act by triming the ubiquitin chain on the associated substrate to facilitate their threading through the VCP/p97 pore. Ubiquitin moieties on substrates may present a steric impediment to the threading process when the substrate is transferred to the VCP pore and threaded through VCP's axial channel. Mediates deubiquitination of 'Lys-27'-, 'Lys-29'- and 'Lys-33'-linked polyubiquitin chains. Also able to hydrolyze 'Lys-11'-linked ubiquitin chains. Cleaves both polyubiquitin and di-ubiquitin. May play a role in macroautophagy, regulating for instance the clearance of damaged lysosomes. May recruit PLAA, UBXN6 and VCP to damaged lysosome membranes decorated with K48-linked ubiquitin chains and remove these chains allowing autophagosome formation. The polypeptide is Ubiquitin thioesterase OTU1 (YOD1) (Homo sapiens (Human)).